The sequence spans 441 residues: C4-dicarboxylate transport protein (441 aa).

Residues 1 to 30 (MIIEHSAEVRGKTPLYRHLYVQVLAAIAAG) lie on the Cytoplasmic side of the membrane. A helical membrane pass occupies residues 31-49 (ILLGHFYPDIGTELKPLGD). Over 50-68 (AFIRLVKMIIAPVIFLTVA) the chain is Periplasmic. A helical membrane pass occupies residues 69-87 (TGIAGMTDLAKVGRVAGKA). Topologically, residues 88–99 (MIYFLAFSTLAL) are cytoplasmic. The helical transmembrane segment at 100–118 (VVGLVVANVVQPGAGMHID) threads the bilayer. At 119–149 (PASLDAKAVATYAEKAHEQSITGFLMNIIPT) the chain is on the periplasmic side. Residues 150–168 (TLVGAFAEGDILQVLFISV) form a helical membrane-spanning segment. At 169–171 (LFG) the chain is on the cytoplasmic side. Residues 172-190 (ISLAIVGKKAEPVVDFLQA) traverse the membrane as a helical segment. The Periplasmic segment spans residues 191–209 (LTLPIFRLVAILMKAAPIG). Residues 210–228 (AFGAMAFTIGKYGIASIAN) form a helical membrane-spanning segment. Topologically, residues 229–241 (LAMLIGTFYLTSF) are cytoplasmic. The chain crosses the membrane as a helical span at residues 242-260 (LFVFIVLGAVARYNGFSIL). The Periplasmic segment spans residues 261-281 (SLIRYIKEELLLVLGTSSSEA). The chain crosses the membrane as a helical span at residues 282–300 (ALPGLMNKMEKAGCKRSVV). The Cytoplasmic segment spans residues 301–320 (GLVIPTGYSFNLDGTNIYMT). Residues 321–339 (LAALFIAQATDTPLSYGDQ) form a helical membrane-spanning segment. Over 340-350 (ILLLLVAMLSS) the chain is Periplasmic. Residues 351-369 (KGAAGITGAGFITLAATLS) form a helical membrane-spanning segment. Residues 370 to 378 (VVPSVPVAG) lie on the Cytoplasmic side of the membrane. The helical transmembrane segment at 379 to 398 (MALILGIDRFMSECRALTNF) threads the bilayer. Residues 399–405 (VGNAVAT) lie on the Periplasmic side of the membrane. The helical transmembrane segment at 406-424 (IVVAKWEGELDQAQLSAAL) threads the bilayer. The Cytoplasmic portion of the chain corresponds to 425-441 (GGEASVEAIPAVVQPAE).

It belongs to the dicarboxylate/amino acid:cation symporter (DAACS) (TC 2.A.23) family.

Its subcellular location is the cell inner membrane. Responsible for the transport of dicarboxylates such as succinate, fumarate, and malate from the periplasm across the inner membrane. This transport system plays an important role in the energy supply of rhizobium-legume symbionts. This chain is C4-dicarboxylate transport protein (dctA), found in Rhizobium meliloti (strain 1021) (Ensifer meliloti).